The chain runs to 908 residues: Protein translocase subunit SecA (908 aa).

ATP contacts are provided by residues glutamine 87, 105–109 (GEGKT), and aspartate 512. The segment at 860 to 908 (AESLVGSSDEHEAVTAQAPMIRDGEKVGRNDPCPCGSGRKYKQCHGKLS) is disordered. Residues cysteine 892, cysteine 894, cysteine 903, and histidine 904 each contribute to the Zn(2+) site. Positions 898–908 (RKYKQCHGKLS) are enriched in basic residues.

This sequence belongs to the SecA family. As to quaternary structure, monomer and homodimer. Part of the essential Sec protein translocation apparatus which comprises SecA, SecYEG and auxiliary proteins SecDF-YajC and YidC. Zn(2+) is required as a cofactor.

Its subcellular location is the cell inner membrane. It is found in the cytoplasm. It catalyses the reaction ATP + H2O + cellular proteinSide 1 = ADP + phosphate + cellular proteinSide 2.. In terms of biological role, part of the Sec protein translocase complex. Interacts with the SecYEG preprotein conducting channel. Has a central role in coupling the hydrolysis of ATP to the transfer of proteins into and across the cell membrane, serving both as a receptor for the preprotein-SecB complex and as an ATP-driven molecular motor driving the stepwise translocation of polypeptide chains across the membrane. The protein is Protein translocase subunit SecA of Shewanella baltica (strain OS155 / ATCC BAA-1091).